A 278-amino-acid chain; its full sequence is Shikimate dehydrogenase (NADP(+)) (278 aa).

Shikimate is bound by residues 19–21 and Thr66; that span reads SLS. Lys70 (proton acceptor) is an active-site residue. Residues Asn91 and Asp106 each coordinate shikimate. Residues 130–134, 152–157, and Leu222 each bind NADP(+); these read GAGGS and NRTVEK. Shikimate is bound at residue Tyr224. Residue Gly245 coordinates NADP(+).

It belongs to the shikimate dehydrogenase family. In terms of assembly, homodimer.

It carries out the reaction shikimate + NADP(+) = 3-dehydroshikimate + NADPH + H(+). It participates in metabolic intermediate biosynthesis; chorismate biosynthesis; chorismate from D-erythrose 4-phosphate and phosphoenolpyruvate: step 4/7. In terms of biological role, involved in the biosynthesis of the chorismate, which leads to the biosynthesis of aromatic amino acids. Catalyzes the reversible NADPH linked reduction of 3-dehydroshikimate (DHSA) to yield shikimate (SA). The sequence is that of Shikimate dehydrogenase (NADP(+)) from Methanococcus aeolicus (strain ATCC BAA-1280 / DSM 17508 / OCM 812 / Nankai-3).